Here is a 350-residue protein sequence, read N- to C-terminus: tRNA uridine(34) hydroxylase (350 aa).

Positions 146 to 240 constitute a Rhodanese domain; that stretch reads DDPDAIFIDM…YARRAREQGL (95 aa). Cysteine 200 serves as the catalytic Cysteine persulfide intermediate. Positions 318-350 are disordered; sequence QRRRRAGREKGNKIFNKSRGRLNSKLGIPDPTE.

The protein belongs to the TrhO family.

It carries out the reaction uridine(34) in tRNA + AH2 + O2 = 5-hydroxyuridine(34) in tRNA + A + H2O. In terms of biological role, catalyzes oxygen-dependent 5-hydroxyuridine (ho5U) modification at position 34 in tRNAs. This chain is tRNA uridine(34) hydroxylase, found in Salmonella arizonae (strain ATCC BAA-731 / CDC346-86 / RSK2980).